The primary structure comprises 367 residues: Aminomethyltransferase (367 aa).

This sequence belongs to the GcvT family. In terms of assembly, the glycine cleavage system is composed of four proteins: P, T, L and H.

The catalysed reaction is N(6)-[(R)-S(8)-aminomethyldihydrolipoyl]-L-lysyl-[protein] + (6S)-5,6,7,8-tetrahydrofolate = N(6)-[(R)-dihydrolipoyl]-L-lysyl-[protein] + (6R)-5,10-methylene-5,6,7,8-tetrahydrofolate + NH4(+). Functionally, the glycine cleavage system catalyzes the degradation of glycine. The protein is Aminomethyltransferase of Mycobacterium avium (strain 104).